Reading from the N-terminus, the 843-residue chain is Phosphatidylinositol-glycan-specific phospholipase D (843 aa).

The first 23 residues, methionine 1 to serine 23, serve as a signal peptide directing secretion. Asparagine 94, asparagine 271, asparagine 292, asparagine 308, and asparagine 322 each carry an N-linked (GlcNAc...) asparagine glycan. 7 FG-GAP repeats span residues serine 368–proline 429, aspartate 435–serine 498, serine 500–lysine 560, threonine 564–arginine 625, glutamine 635–arginine 695, alanine 707–aspartate 773, and glutamine 791–aspartate 843. N-linked (GlcNAc...) asparagine glycans are attached at residues asparagine 483, asparagine 502, asparagine 592, asparagine 605, and asparagine 661.

It belongs to the GPLD1 family. Monomer. Post-translationally, glycosylated.

The protein localises to the secreted. The enzyme catalyses a 6-(alpha-D-glucosaminyl)-1-(1,2-diacyl-sn-glycero-3-phospho)-1D-myo-inositol + H2O = 6-(alpha-D-glucosaminyl)-1D-myo-inositol + a 1,2-diacyl-sn-glycero-3-phosphate + H(+). This protein hydrolyzes the inositol phosphate linkage in proteins anchored by phosphatidylinositol glycans (GPI-anchor) thus releasing these proteins from the membrane. In Rattus norvegicus (Rat), this protein is Phosphatidylinositol-glycan-specific phospholipase D (Gpld1).